Reading from the N-terminus, the 859-residue chain is Bifunctional uridylyltransferase/uridylyl-removing enzyme (859 aa).

The interval 1 to 325 (MSAHAAPSPE…PATSGITRVL (325 aa)) is uridylyltransferase. The uridylyl-removing stretch occupies residues 326–682 (SHDRFVEKQG…ARPSPIGDAL (357 aa)). The HD domain maps to 444–566 (VDQHILMVLR…VGNERYLTAL (123 aa)). ACT domains follow at residues 683 to 762 (QVLV…PEPS) and 791 to 859 (ILSV…AIAV).

The protein belongs to the GlnD family. Mg(2+) serves as cofactor.

It carries out the reaction [protein-PII]-L-tyrosine + UTP = [protein-PII]-uridylyl-L-tyrosine + diphosphate. It catalyses the reaction [protein-PII]-uridylyl-L-tyrosine + H2O = [protein-PII]-L-tyrosine + UMP + H(+). With respect to regulation, uridylyltransferase (UTase) activity is inhibited by glutamine, while glutamine activates uridylyl-removing (UR) activity. Functionally, modifies, by uridylylation and deuridylylation, the PII regulatory proteins (GlnB and homologs), in response to the nitrogen status of the cell that GlnD senses through the glutamine level. Under low glutamine levels, catalyzes the conversion of the PII proteins and UTP to PII-UMP and PPi, while under higher glutamine levels, GlnD hydrolyzes PII-UMP to PII and UMP (deuridylylation). Thus, controls uridylylation state and activity of the PII proteins, and plays an important role in the regulation of nitrogen fixation and metabolism. The protein is Bifunctional uridylyltransferase/uridylyl-removing enzyme of Burkholderia vietnamiensis (strain G4 / LMG 22486) (Burkholderia cepacia (strain R1808)).